Consider the following 461-residue polypeptide: GTPase Der (461 aa).

EngA-type G domains follow at residues 2–164 (QKII…EDDV) and 197–368 (IRVG…KNFT). GTP-binding positions include 8 to 15 (GKPNVGKS), 55 to 59 (DSGGL), 116 to 119 (NKID), 203 to 210 (GRVNVGKS), 250 to 254 (DTAGI), and 314 to 317 (NKWD). A KH-like domain is found at 369-453 (QKIQTSKLNE…PIVLAPKKRG (85 aa)).

This sequence belongs to the TRAFAC class TrmE-Era-EngA-EngB-Septin-like GTPase superfamily. EngA (Der) GTPase family. Associates with the 50S ribosomal subunit.

Functionally, GTPase that plays an essential role in the late steps of ribosome biogenesis. In Campylobacter curvus (strain 525.92), this protein is GTPase Der.